Here is a 495-residue protein sequence, read N- to C-terminus: Glutelin type-B 2 (495 aa).

The signal sequence occupies residues 1–24 (MATTIFSRFSIYFCAMLLCQGSMA). Intrachain disulfides connect cysteine 45/cysteine 78 and cysteine 121/cysteine 305. Cupin type-1 domains are found at residues 50-245 (LQAF…VAAK) and 311-460 (VNIE…EQAR). Residues 464-495 (NNRGEEHGAFTPRFQQQYYPGFSNESESETSE) form a disordered region.

It belongs to the 11S seed storage protein (globulins) family. As to quaternary structure, hexamer; each subunit is composed of an acidic and a basic chain derived from a single precursor and linked by a disulfide bond.

Its function is as follows. Seed storage protein. In Oryza sativa subsp. japonica (Rice), this protein is Glutelin type-B 2 (GLUB2).